The primary structure comprises 911 residues: DNA polymerase I (911 aa).

In terms of domain architecture, 5'-3' exonuclease spans 186 to 280 (VTPAQYPDLA…DTLRLQPWDR (95 aa)). The 3'-5' exonuclease domain maps to 320-497 (RGGLLESGTV…LAAALDAELD (178 aa)).

Belongs to the DNA polymerase type-A family. As to quaternary structure, single-chain monomer with multiple functions.

It carries out the reaction DNA(n) + a 2'-deoxyribonucleoside 5'-triphosphate = DNA(n+1) + diphosphate. Its function is as follows. In addition to polymerase activity, this DNA polymerase exhibits 3'-5' and 5'-3' exonuclease activity. This is DNA polymerase I (polA) from Mycobacterium leprae (strain TN).